The following is a 298-amino-acid chain: Ribosomal RNA small subunit methyltransferase H (298 aa).

Residues 46–48, Asp65, Phe92, Asp108, and His115 each bind S-adenosyl-L-methionine; that span reads GGH.

The protein belongs to the methyltransferase superfamily. RsmH family.

It localises to the cytoplasm. It carries out the reaction cytidine(1402) in 16S rRNA + S-adenosyl-L-methionine = N(4)-methylcytidine(1402) in 16S rRNA + S-adenosyl-L-homocysteine + H(+). Functionally, specifically methylates the N4 position of cytidine in position 1402 (C1402) of 16S rRNA. This Nostoc punctiforme (strain ATCC 29133 / PCC 73102) protein is Ribosomal RNA small subunit methyltransferase H.